The chain runs to 94 residues: MLQSNEYFDGKVKSIGFTSSSTGRASVGVMAEGEYTFGTAQPEEMTVVSGALNVLLPGETEWKVYAAGEVFNVPGNSEFHLQVAEPTSYLCRYL.

It belongs to the nucleoside phosphorylase PpnP family.

It catalyses the reaction a purine D-ribonucleoside + phosphate = a purine nucleobase + alpha-D-ribose 1-phosphate. The catalysed reaction is adenosine + phosphate = alpha-D-ribose 1-phosphate + adenine. The enzyme catalyses cytidine + phosphate = cytosine + alpha-D-ribose 1-phosphate. It carries out the reaction guanosine + phosphate = alpha-D-ribose 1-phosphate + guanine. It catalyses the reaction inosine + phosphate = alpha-D-ribose 1-phosphate + hypoxanthine. The catalysed reaction is thymidine + phosphate = 2-deoxy-alpha-D-ribose 1-phosphate + thymine. The enzyme catalyses uridine + phosphate = alpha-D-ribose 1-phosphate + uracil. It carries out the reaction xanthosine + phosphate = alpha-D-ribose 1-phosphate + xanthine. Catalyzes the phosphorolysis of diverse nucleosides, yielding D-ribose 1-phosphate and the respective free bases. Can use uridine, adenosine, guanosine, cytidine, thymidine, inosine and xanthosine as substrates. Also catalyzes the reverse reactions. This Klebsiella pneumoniae (strain 342) protein is Pyrimidine/purine nucleoside phosphorylase.